Reading from the N-terminus, the 118-residue chain is Large ribosomal subunit protein uL24 (118 aa).

Residues Met-1–Val-24 are disordered.

The protein belongs to the universal ribosomal protein uL24 family. As to quaternary structure, part of the 50S ribosomal subunit.

Its function is as follows. One of two assembly initiator proteins, it binds directly to the 5'-end of the 23S rRNA, where it nucleates assembly of the 50S subunit. Located at the polypeptide exit tunnel on the outside of the subunit. This is Large ribosomal subunit protein uL24 from Halobacterium salinarum (strain ATCC 700922 / JCM 11081 / NRC-1) (Halobacterium halobium).